A 200-amino-acid chain; its full sequence is Holliday junction branch migration complex subunit RuvA (200 aa).

The interval 1–63 is domain I; the sequence is MIGKLSGKID…EEHIHLYGFL (63 aa). The tract at residues 64–142 is domain II; it reads TLEEKNFFNL…KIFSSSAIIK (79 aa). Residues 142-146 form a flexible linker region; that stretch reads KDSSN. The domain III stretch occupies residues 147 to 200; the sequence is ISSVEINEVIKALVNLGFTRFEAQNTVQGIITQNTKISIDELIKTALKNRNSSF.

The protein belongs to the RuvA family. In terms of assembly, homotetramer. Forms an RuvA(8)-RuvB(12)-Holliday junction (HJ) complex. HJ DNA is sandwiched between 2 RuvA tetramers; dsDNA enters through RuvA and exits via RuvB. An RuvB hexamer assembles on each DNA strand where it exits the tetramer. Each RuvB hexamer is contacted by two RuvA subunits (via domain III) on 2 adjacent RuvB subunits; this complex drives branch migration. In the full resolvosome a probable DNA-RuvA(4)-RuvB(12)-RuvC(2) complex forms which resolves the HJ.

It is found in the cytoplasm. The RuvA-RuvB-RuvC complex processes Holliday junction (HJ) DNA during genetic recombination and DNA repair, while the RuvA-RuvB complex plays an important role in the rescue of blocked DNA replication forks via replication fork reversal (RFR). RuvA specifically binds to HJ cruciform DNA, conferring on it an open structure. The RuvB hexamer acts as an ATP-dependent pump, pulling dsDNA into and through the RuvAB complex. HJ branch migration allows RuvC to scan DNA until it finds its consensus sequence, where it cleaves and resolves the cruciform DNA. In Rickettsia typhi (strain ATCC VR-144 / Wilmington), this protein is Holliday junction branch migration complex subunit RuvA.